A 189-amino-acid polypeptide reads, in one-letter code: Ras-like protein 1 (189 aa).

10-17 (GAGGVGKS) contributes to the GTP binding site. The short motif at 32 to 40 (YDPTIEDSY) is the Effector region element. GTP is bound by residues 57-61 (DTAGQ) and 116-119 (NKCD). Residue cysteine 186 is modified to Cysteine methyl ester. A lipid anchor (S-geranylgeranyl cysteine) is attached at cysteine 186. Positions 187–189 (KML) are cleaved as a propeptide — removed in mature form.

It belongs to the small GTPase superfamily. Ras family.

The protein localises to the cell membrane. The catalysed reaction is GTP + H2O = GDP + phosphate + H(+). With respect to regulation, alternates between an inactive form bound to GDP and an active form bound to GTP. Activated by a guanine nucleotide-exchange factor (GEF) and inactivated by a GTPase-activating protein (GAP). Its function is as follows. Ras proteins bind GDP/GTP and possess intrinsic GTPase activity. Plays a role in eye development by regulating cell growth, survival of postmitotic ommatidial cells and differentiation of photoreceptor cells. During larval development, mediates Ptth/tor signaling leading to the production of ecdysone, a hormone required for the initiation of metamorphosis. This Drosophila virilis (Fruit fly) protein is Ras-like protein 1.